Reading from the N-terminus, the 287-residue chain is 4,4'-diapophytoene synthase (287 aa).

(2E,6E)-farnesyl diphosphate-binding positions include 18 to 21 (HSKS), Tyr41, and Arg45. The Mg(2+) site is built by Asp48 and Asp52. Gln165 lines the (2E,6E)-farnesyl diphosphate pocket. Position 168 (Asn168) interacts with Mg(2+). Arg171 provides a ligand contact to (2E,6E)-farnesyl diphosphate. Asp172 provides a ligand contact to Mg(2+). Tyr248 provides a ligand contact to (2E,6E)-farnesyl diphosphate.

This sequence belongs to the phytoene/squalene synthase family. CrtM subfamily. The cofactor is Mg(2+).

It catalyses the reaction 2 (2E,6E)-farnesyl diphosphate = 15-cis-4,4'-diapophytoene + 2 diphosphate. It functions in the pathway carotenoid biosynthesis; staphyloxanthin biosynthesis; staphyloxanthin from farnesyl diphosphate: step 1/5. In terms of biological role, involved in the biosynthesis of the yellow-orange carotenoid staphyloxanthin, which plays a role in the virulence via its protective function against oxidative stress. Catalyzes the head-to-head condensation of two molecules of farnesyl diphosphate (FPP) into the colorless C(30) carotenoid 4,4'-diapophytoene (dehydrosqualene). The chain is 4,4'-diapophytoene synthase (crtM) from Staphylococcus aureus (strain bovine RF122 / ET3-1).